Reading from the N-terminus, the 247-residue chain is Ribonuclease 3 (247 aa).

The RNase III domain occupies 21-149 (FKKLSKKIGI…LVGAIYLDRG (129 aa)). A Mg(2+)-binding site is contributed by glutamate 62. Aspartate 66 is an active-site residue. Mg(2+)-binding residues include asparagine 135 and glutamate 138. The active site involves glutamate 138. One can recognise a DRBM domain in the interval 176-245 (DYKTQLQEYS…AKELYIRIRR (70 aa)).

This sequence belongs to the ribonuclease III family. Homodimer. Requires Mg(2+) as cofactor.

It localises to the cytoplasm. It catalyses the reaction Endonucleolytic cleavage to 5'-phosphomonoester.. In terms of biological role, digests double-stranded RNA. Involved in the processing of primary rRNA transcript to yield the immediate precursors to the large and small rRNAs (23S and 16S). Processes some mRNAs, and tRNAs when they are encoded in the rRNA operon. Processes pre-crRNA and tracrRNA of type II CRISPR loci if present in the organism. The protein is Ribonuclease 3 of Leptospira borgpetersenii serovar Hardjo-bovis (strain L550).